We begin with the raw amino-acid sequence, 461 residues long: Argininosuccinate lyase (461 aa).

This sequence belongs to the lyase 1 family. Argininosuccinate lyase subfamily. In terms of assembly, homotetramer.

It localises to the cytoplasm. The enzyme catalyses 2-(N(omega)-L-arginino)succinate = fumarate + L-arginine. Its pathway is amino-acid biosynthesis; L-arginine biosynthesis; L-arginine from L-ornithine and carbamoyl phosphate: step 3/3. The sequence is that of Argininosuccinate lyase from Nostoc punctiforme (strain ATCC 29133 / PCC 73102).